A 199-amino-acid polypeptide reads, in one-letter code: Peptidyl-tRNA hydrolase (199 aa).

Residue Y18 coordinates tRNA. H23 (proton acceptor) is an active-site residue. Residues Y72, N74, and N120 each coordinate tRNA.

The protein belongs to the PTH family. As to quaternary structure, monomer.

The protein resides in the cytoplasm. It catalyses the reaction an N-acyl-L-alpha-aminoacyl-tRNA + H2O = an N-acyl-L-amino acid + a tRNA + H(+). Hydrolyzes ribosome-free peptidyl-tRNAs (with 1 or more amino acids incorporated), which drop off the ribosome during protein synthesis, or as a result of ribosome stalling. Functionally, catalyzes the release of premature peptidyl moieties from peptidyl-tRNA molecules trapped in stalled 50S ribosomal subunits, and thus maintains levels of free tRNAs and 50S ribosomes. The chain is Peptidyl-tRNA hydrolase from Bifidobacterium longum (strain DJO10A).